A 524-amino-acid polypeptide reads, in one-letter code: MNILLLIFYFLVCFLIFDFIKKNKVKKYDVPTLSYALPIIGHLYKLGVNPHRNLTKLVEKNGGIFSLWLGDIKTVIVTDPSINKEIMVKQFTNFSDRPRLKSFESFTGGGVNLIFIDYNEKWPVIRKIVSSSITKTKIISNYKEVIENQTKILINSMRTHSKINEPFKSKKYFGKFSISIVLGIMFKQDNDEKQININDNNIDNDPITKLTEPIQQVFLLLGTGNISDFIKILRPFFKNEYKKLNNSASKVFKFMEEIYDQHLLKFDKSNPRDLMDYFIEYEFTNSPNTTLEEKKISIIKGCMSFVFAGDDTVAATLEWVCLYLINNPAIQEKCYNELISVLGDNNNESKIKFISLKERDNCQYLINVIKEVLRIRTPLPLSVPRIATQNCEINGFFIEKGTQILSNAFGMSHLYVDEPNVFNPDRWINYYNQKQQQQQQQQQPQPIQNNNYFNDLDRVCLPFSTGPRNCVGISIAELNLFSVCANIILNFQIKSIDGMQLKDIEVSGISIHPIPFSIKLISRN.

A helical membrane pass occupies residues 1–21 (MNILLLIFYFLVCFLIFDFIK). Residue Cys-470 participates in heme binding.

The protein belongs to the cytochrome P450 family. Heme is required as a cofactor.

The protein localises to the membrane. The sequence is that of Probable cytochrome P450 519C1 (cyp519C1) from Dictyostelium discoideum (Social amoeba).